The sequence spans 317 residues: Beta-ketoacyl-[acyl-carrier-protein] synthase III (317 aa).

Catalysis depends on residues Cys112 and His244. An ACP-binding region spans residues 245–249 (QANLR). Asn274 is a catalytic residue.

Belongs to the thiolase-like superfamily. FabH family. In terms of assembly, homodimer.

The protein resides in the cytoplasm. The catalysed reaction is malonyl-[ACP] + acetyl-CoA + H(+) = 3-oxobutanoyl-[ACP] + CO2 + CoA. It functions in the pathway lipid metabolism; fatty acid biosynthesis. In terms of biological role, catalyzes the condensation reaction of fatty acid synthesis by the addition to an acyl acceptor of two carbons from malonyl-ACP. Catalyzes the first condensation reaction which initiates fatty acid synthesis and may therefore play a role in governing the total rate of fatty acid production. Possesses both acetoacetyl-ACP synthase and acetyl transacylase activities. Its substrate specificity determines the biosynthesis of branched-chain and/or straight-chain of fatty acids. This Shigella boydii serotype 4 (strain Sb227) protein is Beta-ketoacyl-[acyl-carrier-protein] synthase III.